The chain runs to 357 residues: DNA replication and repair protein RecF (357 aa).

G30–T37 is a binding site for ATP.

This sequence belongs to the RecF family.

Its subcellular location is the cytoplasm. The RecF protein is involved in DNA metabolism; it is required for DNA replication and normal SOS inducibility. RecF binds preferentially to single-stranded, linear DNA. It also seems to bind ATP. The polypeptide is DNA replication and repair protein RecF (Shigella boydii serotype 4 (strain Sb227)).